We begin with the raw amino-acid sequence, 257 residues long: Protein CUSTOS (257 aa).

Low complexity predominate over residues 1-11 (MSDLESSSSSS). The interval 1–72 (MSDLESSSSS…HEQDGNELQT (72 aa)) is disordered. Residues 32–41 (QRPRGPEKPG) show a composition bias toward basic and acidic residues. The residue at position 55 (Ser55) is a Phosphoserine. The residue at position 73 (Thr73) is a Phosphothreonine. Disordered regions lie at residues 120–157 (FTSI…RRCR) and 170–257 (SAIH…VPSN). 2 stretches are compositionally biased toward basic residues: residues 180–190 (KKKKRKLKKKA) and 227–237 (TKKKKRKKKTK). The Nucleolar localization signal (NLS) motif lies at 228–236 (KKKKRKKKT).

This sequence belongs to the CUSTOS family.

The protein resides in the nucleus envelope. Its function is as follows. Plays a role in the regulation of Wnt signaling pathway during early development. The sequence is that of Protein CUSTOS from Bos taurus (Bovine).